The chain runs to 167 residues: Putative C-type lectin protein FPV008/FPV253 (167 aa).

The region spanning 49–152 is the C-type lectin domain; that stretch reads CPDEWIGYNS…SCIFHERTIC (104 aa). Disulfide bonds link Cys-77/Cys-152 and Cys-131/Cys-144.

In Vertebrata (FPV), this protein is Putative C-type lectin protein FPV008/FPV253.